The following is a 1063-amino-acid chain: ATP-dependent helicase hrq1 (1063 aa).

The disordered stretch occupies residues 224-243; that stretch reads TQSRKNQPVPPDSPSIPNDS. Residues 320 to 503 form the Helicase ATP-binding domain; that stretch reads INHLWNGFHV…KIFGVDNIKL (184 aa). 333–340 contributes to the ATP binding site; the sequence is TSTSSGKS. Residues 444 to 447 carry the DEAH box motif; that stretch reads DEAH. The region spanning 539–717 is the Helicase C-terminal domain; that stretch reads EASKLLIKFA…ELPINIRSDE (179 aa).

The protein belongs to the helicase family. HRQ1 subfamily. Forms heptamer rings. Interacts with rhp14. The cofactor is Mg(2+).

Its subcellular location is the nucleus. It catalyses the reaction Couples ATP hydrolysis with the unwinding of duplex DNA by translocating in the 3'-5' direction.. It carries out the reaction ATP + H2O = ADP + phosphate + H(+). Its function is as follows. Helicase with 3'-5' helicase activity involved in genome stability. Functions in the nucleotide excision repair (NER) pathway and plays a critical role in DNA interstrand cross-link repair. Unwinds relatively long duplex DNA up to 120-bp and requires a long 3'-tail of at least 70 nucleotides for efficient unwinding of duplex DNA. Shows both processive helicase and DNA strand annealing activities. Affects telomere length by a non-catalytic mechanism, probably through inhibiting telomerase by competing with it for ssDNA binding. The protein is ATP-dependent helicase hrq1 of Schizosaccharomyces pombe (strain 972 / ATCC 24843) (Fission yeast).